The following is a 372-amino-acid chain: N-methyl-L-tryptophan oxidase (372 aa).

D4–H34 contacts FAD. At C307 the chain carries S-8alpha-FAD cysteine.

Belongs to the MSOX/MTOX family. MTOX subfamily. Monomer. FAD is required as a cofactor.

It catalyses the reaction N(alpha)-methyl-L-tryptophan + O2 + H2O = L-tryptophan + formaldehyde + H2O2. In terms of biological role, catalyzes the oxidative demethylation of N-methyl-L-tryptophan. This chain is N-methyl-L-tryptophan oxidase, found in Salmonella dublin (strain CT_02021853).